A 358-amino-acid polypeptide reads, in one-letter code: Dual-specificity RNA methyltransferase RlmN (358 aa).

Residue Glu-91 is the Proton acceptor of the active site. One can recognise a Radical SAM core domain in the interval Ser-98–Asp-335. A disulfide bridge connects residues Cys-105 and Cys-340. 3 residues coordinate [4Fe-4S] cluster: Cys-112, Cys-116, and Cys-119. Residues Gly-164–Glu-165, Ser-196, Ser-219–His-221, and Asn-295 each bind S-adenosyl-L-methionine. Cys-340 serves as the catalytic S-methylcysteine intermediate.

Belongs to the radical SAM superfamily. RlmN family. [4Fe-4S] cluster serves as cofactor.

It is found in the cytoplasm. The enzyme catalyses adenosine(2503) in 23S rRNA + 2 reduced [2Fe-2S]-[ferredoxin] + 2 S-adenosyl-L-methionine = 2-methyladenosine(2503) in 23S rRNA + 5'-deoxyadenosine + L-methionine + 2 oxidized [2Fe-2S]-[ferredoxin] + S-adenosyl-L-homocysteine. It carries out the reaction adenosine(37) in tRNA + 2 reduced [2Fe-2S]-[ferredoxin] + 2 S-adenosyl-L-methionine = 2-methyladenosine(37) in tRNA + 5'-deoxyadenosine + L-methionine + 2 oxidized [2Fe-2S]-[ferredoxin] + S-adenosyl-L-homocysteine. In terms of biological role, specifically methylates position 2 of adenine 2503 in 23S rRNA and position 2 of adenine 37 in tRNAs. m2A2503 modification seems to play a crucial role in the proofreading step occurring at the peptidyl transferase center and thus would serve to optimize ribosomal fidelity. The chain is Dual-specificity RNA methyltransferase RlmN from Oleidesulfovibrio alaskensis (strain ATCC BAA-1058 / DSM 17464 / G20) (Desulfovibrio alaskensis).